Here is a 632-residue protein sequence, read N- to C-terminus: MAU2 chromatid cohesion factor homolog (632 aa).

TPR repeat units follow at residues 453 to 486 (GGFY…ANAE) and 493 to 526 (SCSL…ASKI).

The protein belongs to the SCC4/mau-2 family. Interacts with Nipped-B to form the cohesin loading complex.

The protein localises to the nucleus. Its subcellular location is the nucleoplasm. Required for association of the cohesin complex with chromatin during interphase. Plays a role in sister chromatid cohesion and normal progression through prometaphase. The polypeptide is MAU2 chromatid cohesion factor homolog (Drosophila melanogaster (Fruit fly)).